Here is a 408-residue protein sequence, read N- to C-terminus: S-adenosylmethionine synthase (408 aa).

142–147 (GEGSGD) is an ATP binding site.

This sequence belongs to the AdoMet synthase 2 family. Mg(2+) is required as a cofactor.

It catalyses the reaction L-methionine + ATP + H2O = S-adenosyl-L-methionine + phosphate + diphosphate. Its pathway is amino-acid biosynthesis; S-adenosyl-L-methionine biosynthesis; S-adenosyl-L-methionine from L-methionine: step 1/1. Catalyzes the formation of S-adenosylmethionine from methionine and ATP. This Halobacterium salinarum (strain ATCC 29341 / DSM 671 / R1) protein is S-adenosylmethionine synthase.